A 506-amino-acid chain; its full sequence is AAA-ATPase At4g25835 (506 aa).

Residues 1 to 20 (MKEYWTSLASLLGVLAFCQS) form the signal peptide. 244 to 251 (GPPGTGKS) provides a ligand contact to ATP. Residues 462–506 (GKSRVQNVSLEEQENRAFDSLYAEENGGEEEEIEDNICKSSDDCS) form a disordered region. Residues 487–496 (NGGEEEEIED) are compositionally biased toward acidic residues. Positions 497–506 (NICKSSDDCS) are enriched in basic and acidic residues.

It belongs to the AAA ATPase family. BCS1 subfamily. Mg(2+) serves as cofactor.

The catalysed reaction is ATP + H2O = ADP + phosphate + H(+). This is AAA-ATPase At4g25835 from Arabidopsis thaliana (Mouse-ear cress).